The following is a 311-amino-acid chain: tRNA-cytidine(32) 2-sulfurtransferase (311 aa).

A PP-loop motif motif is present at residues 47–52 (SGGKDS). Cys122, Cys125, and Cys213 together coordinate [4Fe-4S] cluster.

This sequence belongs to the TtcA family. Homodimer. Mg(2+) is required as a cofactor. The cofactor is [4Fe-4S] cluster.

The protein localises to the cytoplasm. It carries out the reaction cytidine(32) in tRNA + S-sulfanyl-L-cysteinyl-[cysteine desulfurase] + AH2 + ATP = 2-thiocytidine(32) in tRNA + L-cysteinyl-[cysteine desulfurase] + A + AMP + diphosphate + H(+). Its pathway is tRNA modification. In terms of biological role, catalyzes the ATP-dependent 2-thiolation of cytidine in position 32 of tRNA, to form 2-thiocytidine (s(2)C32). The sulfur atoms are provided by the cysteine/cysteine desulfurase (IscS) system. The sequence is that of tRNA-cytidine(32) 2-sulfurtransferase from Escherichia coli (strain SMS-3-5 / SECEC).